The chain runs to 474 residues: 6-phospho-beta-galactosidase (474 aa).

The D-galactose 6-phosphate site is built by Q19, H116, N159, E160, and N297. Residue E160 is the Proton donor of the active site. The active-site Nucleophile is the E375. 4 residues coordinate D-galactose 6-phosphate: S433, W434, K440, and Y442.

The protein belongs to the glycosyl hydrolase 1 family.

It catalyses the reaction a 6-phospho-beta-D-galactoside + H2O = D-galactose 6-phosphate + an alcohol. The protein operates within carbohydrate metabolism; lactose degradation; D-galactose 6-phosphate and beta-D-glucose from lactose 6-phosphate: step 1/1. This chain is 6-phospho-beta-galactosidase, found in Lacticaseibacillus casei (strain BL23) (Lactobacillus casei).